The sequence spans 69 residues: MDAIDSVVDPLRDFAKDSIRLVKRCHKPDRKEFTKVAVRTAIGFVVMGFVGFFVKLIFIPINNIIVGAT.

Residue Met1 is modified to N-acetylmethionine. The Cytoplasmic segment spans residues 1–32; that stretch reads MDAIDSVVDPLRDFAKDSIRLVKRCHKPDRKE. A helical membrane pass occupies residues 33–61; that stretch reads FTKVAVRTAIGFVVMGFVGFFVKLIFIPI. At 62–69 the chain is on the extracellular side; that stretch reads NNIIVGAT.

The protein belongs to the SecE/SEC61-gamma family. Heterotrimeric complex composed of SEC61-alpha, SEC61-beta and SEC61-gamma.

The protein resides in the endoplasmic reticulum membrane. Functionally, necessary for protein translocation in the endoplasmic reticulum. This chain is Protein transport protein Sec61 subunit gamma-1 (SEC61G1), found in Arabidopsis thaliana (Mouse-ear cress).